We begin with the raw amino-acid sequence, 154 residues long: Ribonuclease H (154 aa).

The 142-residue stretch at 3 to 144 (ELPVVTIYTD…ADQLARDGIV (142 aa)) folds into the RNase H type-1 domain. The Mg(2+) site is built by Asp-12, Glu-50, Asp-72, and Asp-136.

This sequence belongs to the RNase H family. As to quaternary structure, monomer. Requires Mg(2+) as cofactor.

The protein resides in the cytoplasm. It carries out the reaction Endonucleolytic cleavage to 5'-phosphomonoester.. Functionally, endonuclease that specifically degrades the RNA of RNA-DNA hybrids. This Bradyrhizobium diazoefficiens (strain JCM 10833 / BCRC 13528 / IAM 13628 / NBRC 14792 / USDA 110) protein is Ribonuclease H.